The primary structure comprises 315 residues: Ribosomal RNA small subunit methyltransferase H (315 aa).

S-adenosyl-L-methionine contacts are provided by residues Gly-61–His-63, Asp-80, Phe-108, Asp-124, and Gln-131. Residues Pro-291–Leu-315 form a disordered region. Positions Arg-301–Leu-315 are enriched in basic residues.

This sequence belongs to the methyltransferase superfamily. RsmH family.

It localises to the cytoplasm. The enzyme catalyses cytidine(1402) in 16S rRNA + S-adenosyl-L-methionine = N(4)-methylcytidine(1402) in 16S rRNA + S-adenosyl-L-homocysteine + H(+). Specifically methylates the N4 position of cytidine in position 1402 (C1402) of 16S rRNA. The sequence is that of Ribosomal RNA small subunit methyltransferase H from Crocosphaera subtropica (strain ATCC 51142 / BH68) (Cyanothece sp. (strain ATCC 51142)).